The sequence spans 261 residues: Carbonic anhydrase 1 (261 aa).

Ala2 is modified (N-acetylalanine). The Alpha-carbonic anhydrase domain maps to 4 to 261; it reads ADWGYGSENG…LKGRTVRASF (258 aa). His65 serves as the catalytic Proton donor/acceptor. The Zn(2+) site is built by His95, His97, and His120. Substrate-binding positions include Thr200 and 200 to 201; that span reads TH. Residues 239–261 form a disordered region; the sequence is AVPVLSNHRPPQPLKGRTVRASF.

Belongs to the alpha-carbonic anhydrase family. It depends on Zn(2+) as a cofactor.

Its subcellular location is the cytoplasm. It carries out the reaction hydrogencarbonate + H(+) = CO2 + H2O. The catalysed reaction is urea = cyanamide + H2O. Its activity is regulated as follows. Inhibited by acetazolamide. Catalyzes the reversible hydration of carbon dioxide. Can hydrate cyanamide to urea. This chain is Carbonic anhydrase 1 (Ca1), found in Mus musculus (Mouse).